We begin with the raw amino-acid sequence, 342 residues long: Tetraacyldisaccharide 4'-kinase (342 aa).

Residue Thr68 to Thr75 coordinates ATP.

Belongs to the LpxK family.

It catalyses the reaction a lipid A disaccharide + ATP = a lipid IVA + ADP + H(+). The protein operates within glycolipid biosynthesis; lipid IV(A) biosynthesis; lipid IV(A) from (3R)-3-hydroxytetradecanoyl-[acyl-carrier-protein] and UDP-N-acetyl-alpha-D-glucosamine: step 6/6. In terms of biological role, transfers the gamma-phosphate of ATP to the 4'-position of a tetraacyldisaccharide 1-phosphate intermediate (termed DS-1-P) to form tetraacyldisaccharide 1,4'-bis-phosphate (lipid IVA). This chain is Tetraacyldisaccharide 4'-kinase, found in Burkholderia cenocepacia (strain HI2424).